The following is a 300-amino-acid chain: Tyrosine phosphatase-like protein J1 (300 aa).

Residues 27-294 (LKREHEHIMQ…IFCYFTVLQF (268 aa)) form the Tyrosine-protein phosphatase domain.

It belongs to the protein-tyrosine phosphatase family.

In Microplitis demolitor (Parasitoid wasp), this protein is Tyrosine phosphatase-like protein J1 (J1).